The sequence spans 189 residues: Chitin synthase 2 (189 aa).

Belongs to the chitin synthase family. Class II subfamily.

It localises to the cell membrane. It carries out the reaction [(1-&gt;4)-N-acetyl-beta-D-glucosaminyl](n) + UDP-N-acetyl-alpha-D-glucosamine = [(1-&gt;4)-N-acetyl-beta-D-glucosaminyl](n+1) + UDP + H(+). Functionally, polymerizes chitin, a structural polymer of the cell wall and septum, by transferring the sugar moiety of UDP-GlcNAc to the non-reducing end of the growing chitin polymer. This Xylohypha bantiana protein is Chitin synthase 2 (CHS2).